A 392-amino-acid polypeptide reads, in one-letter code: GDSL esterase/lipase ESM1 (392 aa).

Positions 1-28 (MADNLNLVSVLGVLLVLTIFHNPIIVYA) are cleaved as a signal peptide. Residue S43 is the Nucleophile of the active site. N146, N166, and N290 each carry an N-linked (GlcNAc...) asparagine glycan. Active-site residues include D324 and H327.

The protein belongs to the 'GDSL' lipolytic enzyme family.

The protein localises to the secreted. Functionally, represses or inhibits nitriles production from methionine-derived and from indol-3-ylmethyl glucosinolates. Favors isothiocyanate production. This is GDSL esterase/lipase ESM1 (ESM1) from Arabidopsis thaliana (Mouse-ear cress).